The following is a 297-amino-acid chain: Coatomer subunit epsilon-2 (297 aa).

This sequence belongs to the COPE family. Oligomeric complex that consists of at least the alpha, beta, beta', gamma, delta, epsilon and zeta subunits.

It is found in the cytoplasm. Its subcellular location is the golgi apparatus membrane. The protein localises to the cytoplasmic vesicle. The protein resides in the COPI-coated vesicle membrane. The coatomer is a cytosolic protein complex that binds to dilysine motifs and reversibly associates with Golgi non-clathrin-coated vesicles, which further mediate biosynthetic protein transport from the ER, via the Golgi up to the trans Golgi network. The coatomer complex is required for budding from Golgi membranes, and is essential for the retrograde Golgi-to-ER transport of dilysine-tagged proteins. This Oryza sativa subsp. indica (Rice) protein is Coatomer subunit epsilon-2.